Here is an 81-residue protein sequence, read N- to C-terminus: MSHTVKIYDTCIGCTQCVRACPTDVLEMVPWDGCKAAQVASSPRTEDCVGCKRCETACPTDFLSIRVYLGAETTRSMGLAY.

4Fe-4S ferredoxin-type domains are found at residues 2-31 (SHTV…MVPW) and 39-68 (VASS…IRVY). [4Fe-4S] cluster is bound by residues cysteine 11, cysteine 14, cysteine 17, cysteine 21, cysteine 48, cysteine 51, cysteine 54, and cysteine 58.

As to quaternary structure, the cyanobacterial PSI reaction center is composed of one copy each of PsaA,B,C,D,E,F,I,J,K,L,M and X, and forms trimeric complexes. Requires [4Fe-4S] cluster as cofactor.

It is found in the cellular thylakoid membrane. It carries out the reaction reduced [plastocyanin] + hnu + oxidized [2Fe-2S]-[ferredoxin] = oxidized [plastocyanin] + reduced [2Fe-2S]-[ferredoxin]. Its function is as follows. Apoprotein for the two 4Fe-4S centers FA and FB of photosystem I (PSI); essential for photochemical activity. FB is the terminal electron acceptor of PSI, donating electrons to ferredoxin. The C-terminus interacts with PsaA/B/D and helps assemble the protein into the PSI complex. Required for binding of PsaD and PsaE to PSI. PSI is a plastocyanin/cytochrome c6-ferredoxin oxidoreductase, converting photonic excitation into a charge separation, which transfers an electron from the donor P700 chlorophyll pair to the spectroscopically characterized acceptors A0, A1, FX, FA and FB in turn. The protein is Photosystem I iron-sulfur center of Trichormus variabilis (strain ATCC 29413 / PCC 7937) (Anabaena variabilis).